Consider the following 476-residue polypeptide: Bifunctional protein HldE (476 aa).

The interval 1-318 (MKPILPDYNN…AEAIHGSRDT (318 aa)) is ribokinase. ATP is bound at residue 195–198 (NMSE). Asp-264 is an active-site residue. The cytidylyltransferase stretch occupies residues 344–476 (MTNGCFDILH…IIDAIKGGRG (133 aa)).

The protein in the N-terminal section; belongs to the carbohydrate kinase PfkB family. In the C-terminal section; belongs to the cytidylyltransferase family. As to quaternary structure, homodimer.

It catalyses the reaction D-glycero-beta-D-manno-heptose 7-phosphate + ATP = D-glycero-beta-D-manno-heptose 1,7-bisphosphate + ADP + H(+). It carries out the reaction D-glycero-beta-D-manno-heptose 1-phosphate + ATP + H(+) = ADP-D-glycero-beta-D-manno-heptose + diphosphate. The protein operates within nucleotide-sugar biosynthesis; ADP-L-glycero-beta-D-manno-heptose biosynthesis; ADP-L-glycero-beta-D-manno-heptose from D-glycero-beta-D-manno-heptose 7-phosphate: step 1/4. It participates in nucleotide-sugar biosynthesis; ADP-L-glycero-beta-D-manno-heptose biosynthesis; ADP-L-glycero-beta-D-manno-heptose from D-glycero-beta-D-manno-heptose 7-phosphate: step 3/4. Its pathway is bacterial outer membrane biogenesis; LPS core biosynthesis. Its function is as follows. Catalyzes the phosphorylation of D-glycero-D-manno-heptose 7-phosphate at the C-1 position to selectively form D-glycero-beta-D-manno-heptose-1,7-bisphosphate. Functionally, catalyzes the ADP transfer from ATP to D-glycero-beta-D-manno-heptose 1-phosphate, yielding ADP-D-glycero-beta-D-manno-heptose. This chain is Bifunctional protein HldE, found in Vibrio vulnificus (strain CMCP6).